A 574-amino-acid polypeptide reads, in one-letter code: Golgin subfamily A member 6-like protein 4 (574 aa).

Residues 1 to 11 (MWPQPRFPPHP) are compositionally biased toward pro residues. Disordered regions lie at residues 1–77 (MWPQ…YGEG) and 491–552 (KELK…AAGG). The segment covering 51–62 (NGSSPDTATSGG) has biased composition (polar residues). The stretch at 157-496 (SKVEQLQDET…EQQVKELKKS (340 aa)) forms a coiled coil. The segment covering 491–504 (KELKKSGGAEEPRG) has biased composition (basic and acidic residues). Over residues 508-523 (AAAARPVAGAPVPQGA) the composition is skewed to low complexity.

It belongs to the GOLGA6 family.

The polypeptide is Golgin subfamily A member 6-like protein 4 (GOLGA6L4) (Homo sapiens (Human)).